The sequence spans 248 residues: Undecaprenyl-diphosphatase (248 aa).

Helical transmembrane passes span 4–24 (IVLGLIQGLTEFLPISSSGHL), 40–60 (FAFLHLATLAAIIVFVWKEIV), 74–94 (YSLVLKIIISTIPAAIFGFLF), 101–121 (SFSNLKIISFFFLVTAASLFV), 134–154 (ISYIDALIIGLFQMIAIFPGI), 174–194 (ALKYSFLMGIPVILGAGILET), 201–221 (SYILISGLVAFLSGLLSLLIL), and 228–248 (KKLKIFSYYCILIAIIAFFVG).

This sequence belongs to the UppP family.

Its subcellular location is the cell inner membrane. It carries out the reaction di-trans,octa-cis-undecaprenyl diphosphate + H2O = di-trans,octa-cis-undecaprenyl phosphate + phosphate + H(+). Catalyzes the dephosphorylation of undecaprenyl diphosphate (UPP). Confers resistance to bacitracin. In Thermosipho africanus (strain TCF52B), this protein is Undecaprenyl-diphosphatase.